We begin with the raw amino-acid sequence, 202 residues long: Cytochrome c oxidase assembly protein CtaG (202 aa).

Residues 1–14 are Cytoplasmic-facing; that stretch reads MSDKAAAPRKQGRN. A helical; Signal-anchor for type II membrane protein transmembrane segment spans residues 15 to 37; the sequence is NGAVVMMCLSFVFGMGAMSYAAV. Topologically, residues 38-202 are periplasmic; the sequence is PLYRIFCQVT…GGTVKIEKKL (165 aa).

The protein belongs to the COX11/CtaG family.

The protein resides in the cell inner membrane. Exerts its effect at some terminal stage of cytochrome c oxidase synthesis, probably by being involved in the insertion of the copper B into subunit I. This Rhizobium etli (strain ATCC 51251 / DSM 11541 / JCM 21823 / NBRC 15573 / CFN 42) protein is Cytochrome c oxidase assembly protein CtaG.